A 507-amino-acid chain; its full sequence is TOM1-like protein 2 (507 aa).

Residues 20–152 (ATDGSLQSED…ELKRKGVEFP (133 aa)) enclose the VHS domain. Position 160 is a phosphoserine (Ser160). The disordered stretch occupies residues 162–210 (IHTPQRSVPEVDPAATMPRSQSQQRTSAGSYSSPPPAPYSAPQAPALSV). Thr164 bears the Phosphothreonine mark. The GAT domain occupies 219 to 307 (EQIARLRSEL…VFLRYERFER (89 aa)). Residues 329–334 (NLIDLG) carry the Clathrin-binding motif. The segment at 467–507 (RAKAAEMVPDLPSPPMEAPAPASNPSGRKKPERSEDALFAL) is disordered. A compositionally biased stretch (basic and acidic residues) spans 498–507 (ERSEDALFAL).

Belongs to the TOM1 family. Interacts with clathrin, SRC and TOLLIP. Interacts with MYO6. Ubiquitously expressed with higher expression in heart and skeletal muscle.

Its function is as follows. Acts as a MYO6/Myosin VI adapter protein that targets myosin VI to endocytic structures. May also play a role in recruiting clathrin to endosomes. May regulate growth factor-induced mitogenic signaling. This Homo sapiens (Human) protein is TOM1-like protein 2 (TOM1L2).